The sequence spans 713 residues: P-loop NTPase domain-containing protein LPA1 homolog (713 aa).

Disordered stretches follow at residues 218–249 (AKKRSGISTTSTIDFDKTRPLNDKPDGKPIGK), 504–575 (TSQA…EDLS), and 650–713 (LDSP…APDK). The span at 231–246 (DFDKTRPLNDKPDGKP) shows a compositional bias: basic and acidic residues. Over residues 504-531 (TSQAGSVNESWDNANEGTGSHVPSSSGS) the composition is skewed to polar residues. A compositionally biased stretch (basic and acidic residues) spans 533-544 (KKLDGHCKEIKE). Over residues 551-562 (SDDDEEEEEEAA) the composition is skewed to acidic residues. Residues 656–668 (ARSSSALPISASS) show a composition bias toward low complexity.

Its function is as follows. Required for the accumulation of phytic acid in seeds. Phytic acid is the primary storage form of phosphorus in cereal grains and other plant seeds. This chain is P-loop NTPase domain-containing protein LPA1 homolog, found in Oryza sativa subsp. japonica (Rice).